A 304-amino-acid polypeptide reads, in one-letter code: Cell division protein ZipA (304 aa).

Residues methionine 1–arginine 5 are Periplasmic-facing. Residues leucine 6–threonine 26 traverse the membrane as a helical segment. Residues serine 27–histidine 304 are Cytoplasmic-facing. The tract at residues arginine 31–lysine 165 is disordered. Residues alanine 121–glutamate 132 are compositionally biased toward basic and acidic residues. Low complexity predominate over residues alanine 137 to proline 158.

Belongs to the ZipA family. In terms of assembly, interacts with FtsZ via their C-terminal domains.

The protein resides in the cell inner membrane. In terms of biological role, essential cell division protein that stabilizes the FtsZ protofilaments by cross-linking them and that serves as a cytoplasmic membrane anchor for the Z ring. Also required for the recruitment to the septal ring of downstream cell division proteins. This Erwinia tasmaniensis (strain DSM 17950 / CFBP 7177 / CIP 109463 / NCPPB 4357 / Et1/99) protein is Cell division protein ZipA.